The following is a 41-amino-acid chain: Pi-stichotoxin-Hcr5c (41 aa).

3 cysteine pairs are disulfide-bonded: Cys4/Cys37, Cys6/Cys30, and Cys20/Cys38.

Belongs to the sea anemone type 3 (BDS) potassium channel toxin family.

It is found in the secreted. Its subcellular location is the nematocyst. Weakly and reversibly inhibits rat homomeric ASIC1 (isoform ASIC1a) (IC(50)=4.95 uM), and ASIC3 (IC(50)=17 uM). ASIC1a current inhibition and ASIC3 transient current inhibition are not complete, and reach a maximum of 70% inhibition and 80%, respectively. In Radianthus crispa (Leathery sea anemone), this protein is Pi-stichotoxin-Hcr5c.